Here is a 211-residue protein sequence, read N- to C-terminus: Cytochrome c biogenesis ATP-binding export protein CcmA (211 aa).

The 203-residue stretch at 8–210 folds into the ABC transporter domain; the sequence is LEAKNLQCER…EVRRIQLGAV (203 aa). 40–47 serves as a coordination point for ATP; it reads GPNGAGKT.

This sequence belongs to the ABC transporter superfamily. CcmA exporter (TC 3.A.1.107) family. The complex is composed of two ATP-binding proteins (CcmA) and two transmembrane proteins (CcmB).

The protein localises to the cell inner membrane. It carries out the reaction heme b(in) + ATP + H2O = heme b(out) + ADP + phosphate + H(+). Functionally, part of the ABC transporter complex CcmAB involved in the biogenesis of c-type cytochromes; once thought to export heme, this seems not to be the case, but its exact role is uncertain. Responsible for energy coupling to the transport system. This is Cytochrome c biogenesis ATP-binding export protein CcmA from Hahella chejuensis (strain KCTC 2396).